A 305-amino-acid polypeptide reads, in one-letter code: Heterogeneous nuclear ribonucleoprotein A0 (305 aa).

Position 1 is an N-acetylmethionine (Met1). The RRM 1 domain maps to 7 to 86; sequence CKLFIGGLNV…VELKRAVSRE (80 aa). Position 68 is a phosphoserine (Ser68). A Glycyl lysine isopeptide (Lys-Gly) (interchain with G-Cter in SUMO2) cross-link involves residue Lys80. The residue at position 84 (Ser84) is a Phosphoserine; by MAPKAPK2. Residues Lys96, Lys98, Lys99, and Lys106 each participate in a glycyl lysine isopeptide (Lys-Gly) (interchain with G-Cter in SUMO2) cross-link. An RRM 2 domain is found at 98 to 175; that stretch reads KKLFVGGLKG…HRVEVKKAVP (78 aa). Position 133 is an N6-acetyllysine (Lys133). An Omega-N-methylarginine modification is found at Arg139. Residues Lys154, Lys159, Lys172, and Lys176 each participate in a glycyl lysine isopeptide (Lys-Gly) (interchain with G-Cter in SUMO2) cross-link. Disordered stretches follow at residues 178-211 and 265-305; these read DIHAGGGGARAARGGRGGGRGRGGGGGGGGRDQN and QSSY…GGSF. Composition is skewed to gly residues over residues 181–211 and 272–284; these read AGGGGARAARGGRGGGRGRGGGGGGGGRDQN and KSGGGGGGGGSWG. Residue Arg286 is modified to Omega-N-methylarginine. Residues 292–305 are compositionally biased toward gly residues; sequence YRGGYGGGYGGGSF. Arg293 is subject to Asymmetric dimethylarginine; alternate. Arg293 carries the dimethylated arginine; alternate modification. Arg293 bears the Omega-N-methylarginine; alternate mark.

Phosphorylated at Ser-84 by MAPKAPK2 in response to LPS treatment, promoting stabilization of GADD45A mRNA. Post-translationally, arg-293 is dimethylated, probably to asymmetric dimethylarginine.

Its subcellular location is the nucleus. Functionally, mRNA-binding component of ribonucleosomes. Specifically binds AU-rich element (ARE)-containing mRNAs. Involved in post-transcriptional regulation of cytokines mRNAs. This Mus musculus (Mouse) protein is Heterogeneous nuclear ribonucleoprotein A0 (Hnrnpa0).